The primary structure comprises 106 residues: Putative double-stranded DNA mimic protein PM0536 (106 aa).

The protein belongs to the putative dsDNA mimic protein family.

Its function is as follows. May act as a double-stranded DNA (dsDNA) mimic. Probably regulates the activity of a dsDNA-binding protein. The protein is Putative double-stranded DNA mimic protein PM0536 of Pasteurella multocida (strain Pm70).